The sequence spans 279 residues: Zinc-finger homeodomain protein 1 (279 aa).

Residues 1–13 (MDFDDHDDGDEEM) are compositionally biased toward acidic residues. Positions 1 to 47 (MDFDDHDDGDEEMPPMPVSSSYETPPQHGLAGGGMAPKPPGEIGSHV) are disordered. A ZF-HD dimerization-type; degenerate zinc finger spans residues 57-106 (YRECLKNHAVGIGGHAVDGCGEFMAAGEEGTIDALRCAACNCHRNFHRKE). Residues 157-191 (AAAAAAGGHPQRPLALPSTSHSGRDDGDDLSGMVG) form a disordered region. The segment at residues 215–278 (KKRFRTKFTQ…NNKHTLGKKL (64 aa)) is a DNA-binding region (homeobox).

In terms of assembly, homo- and heterodimer with other ZFHD proteins.

It is found in the nucleus. Putative transcription factor. In Oryza sativa subsp. indica (Rice), this protein is Zinc-finger homeodomain protein 1 (ZHD1).